The following is a 133-amino-acid chain: Small ribosomal subunit protein uS8 (133 aa).

This sequence belongs to the universal ribosomal protein uS8 family. In terms of assembly, part of the 30S ribosomal subunit. Contacts proteins S5 and S12.

Functionally, one of the primary rRNA binding proteins, it binds directly to 16S rRNA central domain where it helps coordinate assembly of the platform of the 30S subunit. This is Small ribosomal subunit protein uS8 from Orientia tsutsugamushi (strain Boryong) (Rickettsia tsutsugamushi).